We begin with the raw amino-acid sequence, 270 residues long: Formamidopyrimidine-DNA glycosylase (270 aa).

Pro2 acts as the Schiff-base intermediate with DNA in catalysis. Glu3 functions as the Proton donor in the catalytic mechanism. The active-site Proton donor; for beta-elimination activity is Lys58. DNA contacts are provided by His91, Arg110, and Arg151. Residues Leu236–Arg270 form an FPG-type zinc finger. Catalysis depends on Arg260, which acts as the Proton donor; for delta-elimination activity.

Belongs to the FPG family. As to quaternary structure, monomer. Zn(2+) serves as cofactor.

It catalyses the reaction Hydrolysis of DNA containing ring-opened 7-methylguanine residues, releasing 2,6-diamino-4-hydroxy-5-(N-methyl)formamidopyrimidine.. The enzyme catalyses 2'-deoxyribonucleotide-(2'-deoxyribose 5'-phosphate)-2'-deoxyribonucleotide-DNA = a 3'-end 2'-deoxyribonucleotide-(2,3-dehydro-2,3-deoxyribose 5'-phosphate)-DNA + a 5'-end 5'-phospho-2'-deoxyribonucleoside-DNA + H(+). Functionally, involved in base excision repair of DNA damaged by oxidation or by mutagenic agents. Acts as a DNA glycosylase that recognizes and removes damaged bases. Has a preference for oxidized purines, such as 7,8-dihydro-8-oxoguanine (8-oxoG). Has AP (apurinic/apyrimidinic) lyase activity and introduces nicks in the DNA strand. Cleaves the DNA backbone by beta-delta elimination to generate a single-strand break at the site of the removed base with both 3'- and 5'-phosphates. The polypeptide is Formamidopyrimidine-DNA glycosylase (Stenotrophomonas maltophilia (strain R551-3)).